The following is a 457-amino-acid chain: DDB1- and CUL4-associated factor 10 (457 aa).

WD repeat units lie at residues 65–104 (RTHG…HIKT), 108–146 (AHED…SKAC), 150–189 (GHTS…EDGC), and 195–234 (FHTR…KSLE). Over residues 246–265 (TASTSDMTSTSSETRPSSSP) the composition is skewed to low complexity. Residues 246–304 (TASTSDMTSTSSETRPSSSPCHNSDSGPLFEKHMSRSSQREGTSPRNSLEVLTPEVPGE) form a disordered region. The segment covering 281–292 (RSSQREGTSPRN) has biased composition (polar residues). WD repeat units follow at residues 306–346 (DRGN…QEGT), 368–406 (VGRG…KELV), and 424–457 (SHKD…QPKF).

The protein belongs to the WD repeat DCAF10 family.

Its pathway is protein modification; protein ubiquitination. May function as a substrate receptor for CUL4-DDB1 E3 ubiquitin-protein ligase complex. The chain is DDB1- and CUL4-associated factor 10 (dcaf10) from Xenopus laevis (African clawed frog).